A 435-amino-acid chain; its full sequence is 3-phosphoshikimate 1-carboxyvinyltransferase (435 aa).

Positions 23, 24, and 28 each coordinate 3-phosphoshikimate. Residue Lys23 participates in phosphoenolpyruvate binding. Phosphoenolpyruvate-binding residues include Gly96 and Arg124. 3-phosphoshikimate contacts are provided by Ser167, Ser168, Gln169, Ser196, Glu311, and His340. Gln169 is a phosphoenolpyruvate binding site. Glu311 functions as the Proton acceptor in the catalytic mechanism. Positions 344, 385, and 410 each coordinate phosphoenolpyruvate.

It belongs to the EPSP synthase family. Monomer.

It localises to the cytoplasm. It carries out the reaction 3-phosphoshikimate + phosphoenolpyruvate = 5-O-(1-carboxyvinyl)-3-phosphoshikimate + phosphate. It functions in the pathway metabolic intermediate biosynthesis; chorismate biosynthesis; chorismate from D-erythrose 4-phosphate and phosphoenolpyruvate: step 6/7. Its function is as follows. Catalyzes the transfer of the enolpyruvyl moiety of phosphoenolpyruvate (PEP) to the 5-hydroxyl of shikimate-3-phosphate (S3P) to produce enolpyruvyl shikimate-3-phosphate and inorganic phosphate. This is 3-phosphoshikimate 1-carboxyvinyltransferase from Mycolicibacterium paratuberculosis (strain ATCC BAA-968 / K-10) (Mycobacterium paratuberculosis).